Reading from the N-terminus, the 700-residue chain is Protein claret segregational (700 aa).

S94 and S96 each carry phosphoserine. The tract at residues 141 to 185 is disordered; it reads APSSITATAVKRPPVTRPAPRAAGGAAAKKPAGTGAAASSGAAAA. Residues 149 to 185 show a composition bias toward low complexity; the sequence is AVKRPPVTRPAPRAAGGAAAKKPAGTGAAASSGAAAA. Residues 196–346 adopt a coiled-coil conformation; that stretch reads KARFHDLLEK…ELHNTVMDLR (151 aa). Positions 348–670 constitute a Kinesin motor domain; sequence NIRVFCRIRP…LRFAASVNSC (323 aa). 434–441 contributes to the ATP binding site; the sequence is GQTGSGKT. Residues 664–668 are required for minus-end directionality; the sequence is AASVN. The tract at residues 681–700 is disordered; that stretch reads LNNSVANSSTQSNNSGSFDK.

This sequence belongs to the TRAFAC class myosin-kinesin ATPase superfamily. Kinesin family. NCD subfamily.

Its subcellular location is the cytoplasm. It localises to the cytoskeleton. The catalysed reaction is ATP + H2O = ADP + phosphate + H(+). Its function is as follows. Minus-end-directed microtubule-based motor protein. Has ATPase activity. Required for normal chromosomal segregation in meiosis in females, and in early mitotic divisions of the embryo. In Drosophila melanogaster (Fruit fly), this protein is Protein claret segregational (ncd).